The sequence spans 710 residues: Mitochondrial intermediate peptidase (710 aa).

The N-terminal 33 residues, 1–33 (MLLAAGTRYAYRLCGRRAAAALQGRAGRSCARS), are a transit peptide targeting the mitochondrion. Position 124 is an N6-acetyllysine (lysine 124). Residue histidine 492 coordinates Zn(2+). Residue glutamate 493 is part of the active site. Zn(2+)-binding residues include histidine 496 and histidine 499.

It belongs to the peptidase M3 family. As to quaternary structure, monomer. Requires Zn(2+) as cofactor.

Its subcellular location is the mitochondrion matrix. It catalyses the reaction Release of an N-terminal octapeptide as second stage of processing of some proteins imported into the mitochondrion.. With respect to regulation, activity is divalent cation-dependent. It is stimulated by manganese, magnesium or calcium ions and reversibly inhibited by zinc, cobalt and iron. Functionally, cleaves proteins, imported into the mitochondrion, to their mature size. The chain is Mitochondrial intermediate peptidase (Mipep) from Rattus norvegicus (Rat).